Consider the following 246-residue polypeptide: Polyhedrin (246 aa).

This sequence belongs to the polyhedrin family.

Its function is as follows. Major component of the virus occlusion bodies, which are large proteinaceous structures (polyhedra), that protect the virus from the outside environment for extended periods until they are ingested by insect larvae. The sequence is that of Polyhedrin (PH) from Lepidoptera (butterflies and moths).